Here is a 144-residue protein sequence, read N- to C-terminus: Transcription antitermination protein NusB (144 aa).

This sequence belongs to the NusB family.

Functionally, involved in transcription antitermination. Required for transcription of ribosomal RNA (rRNA) genes. Binds specifically to the boxA antiterminator sequence of the ribosomal RNA (rrn) operons. The protein is Transcription antitermination protein NusB of Streptomyces avermitilis (strain ATCC 31267 / DSM 46492 / JCM 5070 / NBRC 14893 / NCIMB 12804 / NRRL 8165 / MA-4680).